We begin with the raw amino-acid sequence, 161 residues long: Lipoprotein signal peptidase (161 aa).

The next 3 helical transmembrane spans lie at 9–29 (ISLLMTIIVLVFDQVSKWLIT), 63–83 (KMLFFYIITIIILIVLVIFYI), and 88–108 (FNLFMQVAISLLFAGALGNFI). Active-site residues include Asp-118 and Asp-136. Residues 131-151 (IFNIADSSLTIGVIFVIIALI) traverse the membrane as a helical segment.

The protein belongs to the peptidase A8 family.

Its subcellular location is the cell membrane. It carries out the reaction Release of signal peptides from bacterial membrane prolipoproteins. Hydrolyzes -Xaa-Yaa-Zaa-|-(S,diacylglyceryl)Cys-, in which Xaa is hydrophobic (preferably Leu), and Yaa (Ala or Ser) and Zaa (Gly or Ala) have small, neutral side chains.. Its pathway is protein modification; lipoprotein biosynthesis (signal peptide cleavage). Its function is as follows. This protein specifically catalyzes the removal of signal peptides from prolipoproteins. This chain is Lipoprotein signal peptidase, found in Staphylococcus epidermidis (strain ATCC 12228 / FDA PCI 1200).